The sequence spans 1248 residues: ABC transporter B family member 7 (1248 aa).

The next 6 helical transmembrane spans lie at 32–52, 82–102, 158–175, 179–201, 261–281, and 299–321; these read IVLM…QPFM, FLYL…CWMV, FTQL…AFIV, LTLA…TYIM, GLGI…AIWY, and VITS…NSFA. The ABC transmembrane type-1 1 domain occupies 35-322; it reads MVIGTLSAMA…TLPSLNSFAA (288 aa). The ABC transporter 1 domain occupies 357 to 593; the sequence is IELRDVYFRY…PEGTYSQLVR (237 aa). 392 to 399 serves as a coordination point for ATP; the sequence is GQSGSGKS. Asn473 and Asn652 each carry an N-linked (GlcNAc...) asparagine glycan. A helical membrane pass occupies residues 682–702; that stretch reads VLLLGSLAAVIHGIVFPVQGL. An ABC transmembrane type-1 2 domain is found at 683-970; that stretch reads LLLGSLAAVI…TSTMAPDINK (288 aa). N-linked (GlcNAc...) asparagine glycosylation occurs at Asn720. Residues 722–742 form a helical membrane-spanning segment; sequence SLFWALIFVALGLTDLIVIPL. Asn779 carries N-linked (GlcNAc...) asparagine glycosylation. 4 helical membrane-spanning segments follow: residues 813–833, 834–854, 914–934, and 939–959; these read IIGA…MALL, VAPV…GFGA, GSYL…SWLI, and ATFG…VGVT. The region spanning 1005 to 1242 is the ABC transporter 2 domain; sequence IELQHVSFRY…SGGAYASLVA (238 aa). ATP is bound at residue 1040 to 1047; sequence GESGSGKS. 3 N-linked (GlcNAc...) asparagine glycosylation sites follow: Asn1094, Asn1193, and Asn1244.

The protein belongs to the ABC transporter superfamily. ABCB family. Multidrug resistance exporter (TC 3.A.1.201) subfamily.

It localises to the membrane. The polypeptide is ABC transporter B family member 7 (ABCB7) (Arabidopsis thaliana (Mouse-ear cress)).